The chain runs to 216 residues: tRNA (guanine-N(7)-)-methyltransferase (216 aa).

4 residues coordinate S-adenosyl-L-methionine: glutamate 44, glutamate 69, asparagine 96, and aspartate 118. Aspartate 118 is an active-site residue. A substrate-binding site is contributed by lysine 122. Positions 124–129 (RHEKRR) are interaction with RNA. Substrate is bound by residues aspartate 154 and 191–194 (TEYE).

The protein belongs to the class I-like SAM-binding methyltransferase superfamily. TrmB family.

It carries out the reaction guanosine(46) in tRNA + S-adenosyl-L-methionine = N(7)-methylguanosine(46) in tRNA + S-adenosyl-L-homocysteine. The protein operates within tRNA modification; N(7)-methylguanine-tRNA biosynthesis. Functionally, catalyzes the formation of N(7)-methylguanine at position 46 (m7G46) in tRNA. The polypeptide is tRNA (guanine-N(7)-)-methyltransferase (Geobacillus thermodenitrificans (strain NG80-2)).